A 90-amino-acid chain; its full sequence is Small ribosomal subunit protein uS15 (90 aa).

The protein belongs to the universal ribosomal protein uS15 family. Part of the 30S ribosomal subunit. Forms a bridge to the 50S subunit in the 70S ribosome, contacting the 23S rRNA.

Its function is as follows. One of the primary rRNA binding proteins, it binds directly to 16S rRNA where it helps nucleate assembly of the platform of the 30S subunit by binding and bridging several RNA helices of the 16S rRNA. Forms an intersubunit bridge (bridge B4) with the 23S rRNA of the 50S subunit in the ribosome. The polypeptide is Small ribosomal subunit protein uS15 (Blochmanniella floridana).